The chain runs to 232 residues: U-scoloptoxin(11)-Ssd2a (232 aa).

The N-terminal stretch at 1-21 is a signal peptide; that stretch reads MFQFCLLILLLAPGRFFSALG. A propeptide spanning residues 22 to 32 is cleaved from the precursor; that stretch reads KPQETLTVENR.

Contains 8 disulfide bonds. As to expression, expressed by the venom gland.

It is found in the secreted. The sequence is that of U-scoloptoxin(11)-Ssd2a from Scolopendra dehaani (Thai centipede).